The primary structure comprises 59 residues: Large ribosomal subunit protein uL30 (59 aa).

This sequence belongs to the universal ribosomal protein uL30 family. In terms of assembly, part of the 50S ribosomal subunit.

The protein is Large ribosomal subunit protein uL30 of Staphylococcus aureus (strain JH1).